Consider the following 318-residue polypeptide: Phosphatidylglycerol--prolipoprotein diacylglyceryl transferase (318 aa).

7 helical membrane passes run 23–43 (PLTI…GAWL), 59–79 (MDII…YHVI), 98–118 (IWEG…GAAI), 124–146 (GVRL…AMGR), 192–212 (FQPT…LLVF), 219–239 (LGAG…RFIF), and 253–273 (LRVN…VFLI). Arg-146 provides a ligand contact to a 1,2-diacyl-sn-glycero-3-phospho-(1'-sn-glycerol). Positions 293 to 312 (FDTRANGHDPEKHDETDGKG) are enriched in basic and acidic residues. Positions 293-318 (FDTRANGHDPEKHDETDGKGNRHHVP) are disordered.

It belongs to the Lgt family.

It localises to the cell membrane. The enzyme catalyses L-cysteinyl-[prolipoprotein] + a 1,2-diacyl-sn-glycero-3-phospho-(1'-sn-glycerol) = an S-1,2-diacyl-sn-glyceryl-L-cysteinyl-[prolipoprotein] + sn-glycerol 1-phosphate + H(+). Its pathway is protein modification; lipoprotein biosynthesis (diacylglyceryl transfer). In terms of biological role, catalyzes the transfer of the diacylglyceryl group from phosphatidylglycerol to the sulfhydryl group of the N-terminal cysteine of a prolipoprotein, the first step in the formation of mature lipoproteins. The sequence is that of Phosphatidylglycerol--prolipoprotein diacylglyceryl transferase from Paenarthrobacter aurescens (strain TC1).